Reading from the N-terminus, the 373-residue chain is Dual-specificity RNA methyltransferase RlmN (373 aa).

Residue Glu91 is the Proton acceptor of the active site. The 243-residue stretch at 97 to 339 folds into the Radical SAM core domain; that stretch reads EDDRGTLCIS…TTVRKTRGDD (243 aa). Residues Cys104 and Cys344 are joined by a disulfide bond. [4Fe-4S] cluster contacts are provided by Cys111, Cys115, and Cys118. S-adenosyl-L-methionine-binding positions include 165–166, Ser197, 219–221, and Asn301; these read GE and SLH. The active-site S-methylcysteine intermediate is the Cys344.

This sequence belongs to the radical SAM superfamily. RlmN family. It depends on [4Fe-4S] cluster as a cofactor.

It is found in the cytoplasm. It catalyses the reaction adenosine(2503) in 23S rRNA + 2 reduced [2Fe-2S]-[ferredoxin] + 2 S-adenosyl-L-methionine = 2-methyladenosine(2503) in 23S rRNA + 5'-deoxyadenosine + L-methionine + 2 oxidized [2Fe-2S]-[ferredoxin] + S-adenosyl-L-homocysteine. The enzyme catalyses adenosine(37) in tRNA + 2 reduced [2Fe-2S]-[ferredoxin] + 2 S-adenosyl-L-methionine = 2-methyladenosine(37) in tRNA + 5'-deoxyadenosine + L-methionine + 2 oxidized [2Fe-2S]-[ferredoxin] + S-adenosyl-L-homocysteine. In terms of biological role, specifically methylates position 2 of adenine 2503 in 23S rRNA and position 2 of adenine 37 in tRNAs. m2A2503 modification seems to play a crucial role in the proofreading step occurring at the peptidyl transferase center and thus would serve to optimize ribosomal fidelity. In Paracidovorax citrulli (strain AAC00-1) (Acidovorax citrulli), this protein is Dual-specificity RNA methyltransferase RlmN.